Reading from the N-terminus, the 204-residue chain is MRILGIDPGLTRCGVGVVDVYADRSARLVDVQVVRTSPTAELHHRLLAVGDGIEELVDRHRPSVVAVERVFAQDNLSTVMGVAQITGVALVGAARRGLDVALHTPSEVKAAVTGYGQADKRQVATMVARILGLDELPTPADASDALALAICAGWRAGMSRAGIAGTQAPTRTGVASAADAAAGAGPTAAQAAWLAAERAQRGRR.

Catalysis depends on residues Asp7, Glu68, and Asp141. The Mg(2+) site is built by Asp7, Glu68, and Asp141.

The protein belongs to the RuvC family. In terms of assembly, homodimer which binds Holliday junction (HJ) DNA. The HJ becomes 2-fold symmetrical on binding to RuvC with unstacked arms; it has a different conformation from HJ DNA in complex with RuvA. In the full resolvosome a probable DNA-RuvA(4)-RuvB(12)-RuvC(2) complex forms which resolves the HJ. Mg(2+) serves as cofactor.

It localises to the cytoplasm. The enzyme catalyses Endonucleolytic cleavage at a junction such as a reciprocal single-stranded crossover between two homologous DNA duplexes (Holliday junction).. The RuvA-RuvB-RuvC complex processes Holliday junction (HJ) DNA during genetic recombination and DNA repair. Endonuclease that resolves HJ intermediates. Cleaves cruciform DNA by making single-stranded nicks across the HJ at symmetrical positions within the homologous arms, yielding a 5'-phosphate and a 3'-hydroxyl group; requires a central core of homology in the junction. The consensus cleavage sequence is 5'-(A/T)TT(C/G)-3'. Cleavage occurs on the 3'-side of the TT dinucleotide at the point of strand exchange. HJ branch migration catalyzed by RuvA-RuvB allows RuvC to scan DNA until it finds its consensus sequence, where it cleaves and resolves the cruciform DNA. In Clavibacter sepedonicus (Clavibacter michiganensis subsp. sepedonicus), this protein is Crossover junction endodeoxyribonuclease RuvC.